The following is a 453-amino-acid chain: MITLKEALKYSKEELENLKKELNEKAKKEKKIGAYIEQFLDKDLSVSGEGVPVAIKDNISVKGWELTSASKILQGYIAPYDASVIVNLKANGFSPFGRCNMDEFAMGSSTASSYYGKTLNPLNFERVPGGSSGGSAAAVAGGLALASLGSDTGGSVRQPAAFCGCVGFKPSYGRVSRYGLASYSSSLDQIGVLTQNVEDAAILYDAIAGYDKMDSTSANIEFIKTAPNLNANKKLKIAVIENYVNDADSEVKNALLKTIDMLKANGHEIVYKNLLDSKFDIAAYYIIATAEASTNLSRYDGVRYGKRSENIQNLKEMYVNTRSEGFGEEVKRRILLGTFVLSSGYYDAYYIKAQKARAFIKAKYEEILQDCDLIFMPVTPTTAFKFDTQKSPIQTYLEDVYTISVNLAGLGGISVPVAKDKEGLNISAQLICKAYDEQTLLDGALSLEQMIKN.

Catalysis depends on charge relay system residues K56 and S131. Catalysis depends on S155, which acts as the Acyl-ester intermediate.

This sequence belongs to the amidase family. GatA subfamily. As to quaternary structure, heterotrimer of A, B and C subunits.

It carries out the reaction L-glutamyl-tRNA(Gln) + L-glutamine + ATP + H2O = L-glutaminyl-tRNA(Gln) + L-glutamate + ADP + phosphate + H(+). Its function is as follows. Allows the formation of correctly charged Gln-tRNA(Gln) through the transamidation of misacylated Glu-tRNA(Gln) in organisms which lack glutaminyl-tRNA synthetase. The reaction takes place in the presence of glutamine and ATP through an activated gamma-phospho-Glu-tRNA(Gln). The sequence is that of Glutamyl-tRNA(Gln) amidotransferase subunit A from Campylobacter jejuni (strain RM1221).